The chain runs to 389 residues: Histidinol-phosphate aminotransferase (389 aa).

K233 carries the N6-(pyridoxal phosphate)lysine modification.

This sequence belongs to the class-II pyridoxal-phosphate-dependent aminotransferase family. The cofactor is pyridoxal 5'-phosphate.

The enzyme catalyses L-histidinol phosphate + 2-oxoglutarate = 3-(imidazol-4-yl)-2-oxopropyl phosphate + L-glutamate. The protein operates within amino-acid biosynthesis; L-histidine biosynthesis; L-histidine from 5-phospho-alpha-D-ribose 1-diphosphate: step 7/9. This Candida maltosa (Yeast) protein is Histidinol-phosphate aminotransferase (HIS5).